A 550-amino-acid polypeptide reads, in one-letter code: Glucose-6-phosphate isomerase (550 aa).

The active-site Proton donor is the E356. Catalysis depends on residues H387 and K515.

The protein belongs to the GPI family.

Its subcellular location is the cytoplasm. The catalysed reaction is alpha-D-glucose 6-phosphate = beta-D-fructose 6-phosphate. Its pathway is carbohydrate biosynthesis; gluconeogenesis. It participates in carbohydrate degradation; glycolysis; D-glyceraldehyde 3-phosphate and glycerone phosphate from D-glucose: step 2/4. Functionally, catalyzes the reversible isomerization of glucose-6-phosphate to fructose-6-phosphate. This is Glucose-6-phosphate isomerase from Vibrio cholerae serotype O1 (strain ATCC 39541 / Classical Ogawa 395 / O395).